We begin with the raw amino-acid sequence, 363 residues long: Protein RecA (363 aa).

79–86 (GPESSGKT) lines the ATP pocket.

Belongs to the RecA family.

It is found in the cytoplasm. Functionally, can catalyze the hydrolysis of ATP in the presence of single-stranded DNA, the ATP-dependent uptake of single-stranded DNA by duplex DNA, and the ATP-dependent hybridization of homologous single-stranded DNAs. It interacts with LexA causing its activation and leading to its autocatalytic cleavage. The protein is Protein RecA of Borrelia turicatae (strain 91E135).